The primary structure comprises 370 residues: Phosphate-binding protein PstS2 (370 aa).

Residues 1 to 22 (MKFARSGAAVSLLAAGTLVLTA) form the signal peptide. Residue C23 is the site of N-palmitoyl cysteine attachment. C23 carries the S-diacylglycerol cysteine lipid modification. Phosphate is bound by residues 54-56 (STA), S84, D102, and 191-193 (SGT).

It belongs to the PstS family. In terms of assembly, the complex is composed of two ATP-binding proteins (PstB), two transmembrane proteins (PstC and PstA) and a solute-binding protein (PstS).

It is found in the cell membrane. Its subcellular location is the secreted. Its function is as follows. Functions in inorganic phosphate uptake, a phosphate-binding protein, although probably not the main uptake protein under phosphate starvation. Part of the ABC transporter complex PstSACB involved in phosphate import. This chain is Phosphate-binding protein PstS2 (pstS2), found in Mycobacterium bovis (strain BCG / Pasteur 1173P2).